The sequence spans 58 residues: Glutathione reductase (58 aa).

The FAD site is built by Glu-5, Thr-12, Cys-13, and Lys-21. Cys-13 and Cys-18 form a disulfide bridge.

This sequence belongs to the class-I pyridine nucleotide-disulfide oxidoreductase family. As to quaternary structure, homodimer. It depends on FAD as a cofactor.

The protein localises to the cytoplasm. It catalyses the reaction 2 glutathione + NADP(+) = glutathione disulfide + NADPH + H(+). Functionally, catalyzes the reduction of glutathione disulfide (GSSG) to reduced glutathione (GSH). Constitutes the major mechanism to maintain a high GSH:GSSG ratio in the cytosol. This is Glutathione reductase from Spirulina sp.